The chain runs to 942 residues: Zinc finger protein 865 (942 aa).

Residues 66 to 106 are disordered; it reads FASTSTSKPKEFKVEAPPSSSLSPSKKPDIATTQQFNNQPP. The span at 96–106 shows a compositional bias: polar residues; that stretch reads ATTQQFNNQPP. C2H2-type zinc fingers lie at residues 172–194, 200–222, 282–304, 310–332, 338–360, 367–389, 466–488, 494–516, 522–544, 564–586, 592–614, 678–700, 706–728, 734–756, 762–784, 790–812, 818–840, 846–868, 874–896, and 902–924; these read FPCTVCQKSFKQSSHLVQHMLVH, YECNTCGRTYNHISSLIRHRRCH, FTCTLCWKVFKKQSHLHQHQIIH, FSCSVCAKSFNRRESLKRHVKTH, VQCEVCGKSFRDTSYLLKHQATH, YKCELCGKSYAAPQSLLRHKQVH, FCCNVCGRGFGRRETLKRHERIH, HQCSVCGKRFRESFHLTKHHVVH, YKCELCGKVFGYPQSLTRHKQIH, FGCTDCGERFPDSFHLMNHKELH, YVCDTCGKCFGFIENLMWHKLVH, FSCSICGQSFKHFLGLVTHKYVH, LACNVCGQNFAGAYDLLLHRRTH, FTCSVCGKRFWEAALLMRHQRCH, YRCTICGRGFLHSWYLRQHKVVH, YKCALCNKRFAQSSSLAEHQRLH, QRCPTCGKTFRYRSNLLEHQRVH, YRCDQCGKSFFYISSILRHQRSH, LRCSCCLKLFKDPKYFSKHVQTH, and FKCGACGEAFSNTYGLKKHRHAH.

Belongs to the krueppel C2H2-type zinc-finger protein family.

It is found in the nucleus. May be involved in transcriptional regulation. This chain is Zinc finger protein 865 (znf865), found in Xenopus tropicalis (Western clawed frog).